The chain runs to 858 residues: Phospholipase D gamma 1 (858 aa).

The 137-residue stretch at 27-163 (PFATSSGSLR…CSGNRIEGLF (137 aa)) folds into the C2 domain. Asp-225 contributes to the Ca(2+) binding site. A PLD phosphodiesterase 1 domain is found at 364 to 399 (TIYTHHQKTVIVDAEAAQNRRKIVAFVGGLDLCNGR). Active-site residues include His-369, Lys-371, and Asp-376. His-369 contacts a 1,2-diacyl-sn-glycero-3-phosphate. His-405 and His-437 together coordinate Ca(2+). A 1,2-diacyl-sn-glycero-3-phosphate is bound at residue Gln-565. Position 680 is a phosphoserine (Ser-680). The region spanning 704–731 (FMIYVHSKGMVVDDEFVLIGSANINQRS) is the PLD phosphodiesterase 2 domain. Active-site residues include His-709, Lys-711, and Asp-716. His-709 contacts a 1,2-diacyl-sn-glycero-3-phosphate. Glu-772 lines the Ca(2+) pocket.

This sequence belongs to the phospholipase D family. C2-PLD subfamily. Ca(2+) serves as cofactor. As to expression, highly expressed in roots and flowers, moderately in stems, leaves and seedlings and low in siliques. Not detected in seeds.

It localises to the cytoplasm. It is found in the membrane. The enzyme catalyses a 1,2-diacyl-sn-glycero-3-phosphocholine + H2O = a 1,2-diacyl-sn-glycero-3-phosphate + choline + H(+). With respect to regulation, inhibited by neomycin. Up-regulated by PIP2 binding. Functionally, hydrolyzes glycerol-phospholipids at the terminal phosphodiesteric bond to generate phosphatidic acids (PA). Plays an important role in various cellular processes, including phytohormone action, vesicular trafficking, secretion, cytoskeletal arrangement, meiosis, tumor promotion, pathogenesis, membrane deterioration and senescence. Can use phosphatidylserine (PS) and phosphatidylethanolamine (PE) as substrates only in the presence of PIP2. Can use phosphatidylcholine (PC), phosphatidylglycerol (PG) or N-acylphosphatidylethanolamine (NAPE) as substrates in the presence of PE and PIP2. Involved in membrane lipid modulation under aluminum (Al) stress and negatively modulate plant tolerance to Al. The protein is Phospholipase D gamma 1 of Arabidopsis thaliana (Mouse-ear cress).